Here is a 92-residue protein sequence, read N- to C-terminus: Large ribosomal subunit protein uL23 (92 aa).

It belongs to the universal ribosomal protein uL23 family. Part of the 50S ribosomal subunit. Contacts protein L29, and trigger factor when it is bound to the ribosome.

Its function is as follows. One of the early assembly proteins it binds 23S rRNA. One of the proteins that surrounds the polypeptide exit tunnel on the outside of the ribosome. Forms the main docking site for trigger factor binding to the ribosome. This is Large ribosomal subunit protein uL23 from Bdellovibrio bacteriovorus (strain ATCC 15356 / DSM 50701 / NCIMB 9529 / HD100).